The sequence spans 554 residues: CTP synthase (554 aa).

The segment at 1–265 is amidoligase domain; that stretch reads MTPLIFVTGG…DELVIVQFKL (265 aa). Ser13 is a CTP binding site. Ser13 lines the UTP pocket. ATP contacts are provided by residues 14–19 and Asp71; that span reads SLGKGI. Mg(2+) is bound by residues Asp71 and Glu139. Residues 146-148, 186-191, and Lys222 contribute to the CTP site; these read DIE and KTKPTQ. Residues 186-191 and Lys222 contribute to the UTP site; that span reads KTKPTQ. The 254-residue stretch at 292–545 folds into the Glutamine amidotransferase type-1 domain; that stretch reads TIAVVGKYVD…VRAAREKKAG (254 aa). Gly353 serves as a coordination point for L-glutamine. Catalysis depends on Cys380, which acts as the Nucleophile; for glutamine hydrolysis. Residues 381–384, Glu404, and Arg471 contribute to the L-glutamine site; that span reads YGMQ. Catalysis depends on residues His518 and Glu520.

This sequence belongs to the CTP synthase family. As to quaternary structure, homotetramer.

It catalyses the reaction UTP + L-glutamine + ATP + H2O = CTP + L-glutamate + ADP + phosphate + 2 H(+). It carries out the reaction L-glutamine + H2O = L-glutamate + NH4(+). The enzyme catalyses UTP + NH4(+) + ATP = CTP + ADP + phosphate + 2 H(+). It participates in pyrimidine metabolism; CTP biosynthesis via de novo pathway; CTP from UDP: step 2/2. Allosterically activated by GTP, when glutamine is the substrate; GTP has no effect on the reaction when ammonia is the substrate. The allosteric effector GTP functions by stabilizing the protein conformation that binds the tetrahedral intermediate(s) formed during glutamine hydrolysis. Inhibited by the product CTP, via allosteric rather than competitive inhibition. Catalyzes the ATP-dependent amination of UTP to CTP with either L-glutamine or ammonia as the source of nitrogen. Regulates intracellular CTP levels through interactions with the four ribonucleotide triphosphates. The protein is CTP synthase of Xanthomonas oryzae pv. oryzae (strain MAFF 311018).